Consider the following 194-residue polypeptide: dTTP/UTP pyrophosphatase (194 aa).

D66 acts as the Proton acceptor in catalysis.

Belongs to the Maf family. YhdE subfamily. A divalent metal cation serves as cofactor.

It localises to the cytoplasm. The enzyme catalyses dTTP + H2O = dTMP + diphosphate + H(+). It carries out the reaction UTP + H2O = UMP + diphosphate + H(+). In terms of biological role, nucleoside triphosphate pyrophosphatase that hydrolyzes dTTP and UTP. May have a dual role in cell division arrest and in preventing the incorporation of modified nucleotides into cellular nucleic acids. This is dTTP/UTP pyrophosphatase from Anaeromyxobacter dehalogenans (strain 2CP-1 / ATCC BAA-258).